The primary structure comprises 296 residues: Light-independent protochlorophyllide reductase iron-sulfur ATP-binding protein (296 aa).

ATP contacts are provided by residues 10 to 15 (GIGKST) and Lys-39. Residue Ser-14 coordinates Mg(2+). Residues Cys-95 and Cys-129 each coordinate [4Fe-4S] cluster. 180–181 (NR) contacts ATP.

Belongs to the NifH/BchL/ChlL family. In terms of assembly, homodimer. Protochlorophyllide reductase is composed of three subunits; ChlL, ChlN and ChlB. [4Fe-4S] cluster serves as cofactor.

It localises to the plastid. Its subcellular location is the chloroplast. The enzyme catalyses chlorophyllide a + oxidized 2[4Fe-4S]-[ferredoxin] + 2 ADP + 2 phosphate = protochlorophyllide a + reduced 2[4Fe-4S]-[ferredoxin] + 2 ATP + 2 H2O. Its pathway is porphyrin-containing compound metabolism; chlorophyll biosynthesis (light-independent). Component of the dark-operative protochlorophyllide reductase (DPOR) that uses Mg-ATP and reduced ferredoxin to reduce ring D of protochlorophyllide (Pchlide) to form chlorophyllide a (Chlide). This reaction is light-independent. The L component serves as a unique electron donor to the NB-component of the complex, and binds Mg-ATP. The sequence is that of Light-independent protochlorophyllide reductase iron-sulfur ATP-binding protein from Mesostigma viride (Green alga).